A 29-amino-acid polypeptide reads, in one-letter code: Cyclotide mela-4 (29 aa).

The cyclopeptide (Gly-Asn) cross-link spans 1–29; it reads GKPICGETCFKGKCYTPGCTCSYPICKKN. Cystine bridges form between cysteine 5–cysteine 19, cysteine 9–cysteine 21, and cysteine 14–cysteine 26.

Post-translationally, this is a cyclic peptide. Contains 3 disulfide bonds.

Probably participates in a plant defense mechanism (Potential). Binds to and induces leakage in phospholipd membranes, particularly ones containing 1-palmitoyl-2-oleophosphatidylethanolamine (POPE). In vitro, displays cytotoxicity against cultured cells. Not active against Gram-negative bacterium E.coli ATCC 25922 or Gram-positive bacterium S.aureus ATCC 25923 up to a concentration of 64 uM. The protein is Cyclotide mela-4 of Melicytus latifolius (Norfolk Island mahoe).